The chain runs to 1030 residues: Beta-galactosidase (1030 aa).

The substrate site is built by asparagine 99 and aspartate 197. Aspartate 197 contributes to the Na(+) binding site. Mg(2+)-binding residues include glutamate 411, histidine 413, and glutamate 456. Substrate is bound by residues glutamate 456 and 532–535 (EYAH). The active-site Proton donor is glutamate 456. Glutamate 532 serves as the catalytic Nucleophile. Asparagine 592 contacts Mg(2+). Positions 596 and 599 each coordinate Na(+). 2 residues coordinate substrate: asparagine 599 and tryptophan 1004.

It belongs to the glycosyl hydrolase 2 family. As to quaternary structure, homotetramer. The cofactor is Mg(2+). Na(+) is required as a cofactor.

It carries out the reaction Hydrolysis of terminal non-reducing beta-D-galactose residues in beta-D-galactosides.. This is Beta-galactosidase from Photobacterium profundum (strain SS9).